We begin with the raw amino-acid sequence, 246 residues long: NAD(P)H-hydrate epimerase (246 aa).

The YjeF N-terminal domain occupies 12–234; the sequence is AAEIDKELMG…DFANKFGFEP (223 aa). Residue 69–73 coordinates (6S)-NADPHX; it reads NNGGD. Positions 70 and 138 each coordinate K(+). (6S)-NADPHX is bound by residues 142–148 and Asp-173; that span reads GFSFKPP. K(+) is bound at residue Thr-176.

The protein belongs to the NnrE/AIBP family. K(+) serves as cofactor.

It is found in the cytoplasm. The protein resides in the mitochondrion. The catalysed reaction is (6R)-NADHX = (6S)-NADHX. It catalyses the reaction (6R)-NADPHX = (6S)-NADPHX. Functionally, catalyzes the epimerization of the S- and R-forms of NAD(P)HX, a damaged form of NAD(P)H that is a result of enzymatic or heat-dependent hydration. This is a prerequisite for the S-specific NAD(P)H-hydrate dehydratase to allow the repair of both epimers of NAD(P)HX. This chain is NAD(P)H-hydrate epimerase, found in Saccharomyces cerevisiae (strain ATCC 204508 / S288c) (Baker's yeast).